The following is a 121-amino-acid chain: MIYPQTMLTVADNTGARKIMCIRVLGGNRKYAKIGDTIIGVVKEAIPNMPIKRSDIVRAIVVRTSKTIRRPDGMYIRFDDNAAVIVNLDNNPRGTRVFGPVAREIRDKNFSKIVSLAPEVL.

Belongs to the universal ribosomal protein uL14 family. In terms of assembly, part of the 50S ribosomal subunit.

The protein localises to the plastid. It is found in the chloroplast. Binds to 23S rRNA. This Trieres chinensis (Marine centric diatom) protein is Large ribosomal subunit protein uL14c.